A 391-amino-acid chain; its full sequence is Heme A synthase (391 aa).

8 consecutive transmembrane segments (helical) span residues 37-57 (IRLW…VGGL), 121-141 (RQLG…FLVA), 152-172 (LLAL…MVAS), 186-206 (LAVH…QALL), 229-249 (TTVL…VAGI), 298-318 (FLHR…WIFG), 332-352 (LLAL…LSAA), and 354-374 (WQVA…ILHA). His-300 serves as a coordination point for heme. His-360 serves as a coordination point for heme.

This sequence belongs to the COX15/CtaA family. Type 2 subfamily. In terms of assembly, interacts with CtaB. The cofactor is heme b.

It is found in the cell membrane. It catalyses the reaction Fe(II)-heme o + 2 A + H2O = Fe(II)-heme a + 2 AH2. It participates in porphyrin-containing compound metabolism; heme A biosynthesis; heme A from heme O: step 1/1. Catalyzes the conversion of heme O to heme A by two successive hydroxylations of the methyl group at C8. The first hydroxylation forms heme I, the second hydroxylation results in an unstable dihydroxymethyl group, which spontaneously dehydrates, resulting in the formyl group of heme A. The polypeptide is Heme A synthase (Cereibacter sphaeroides (strain ATCC 17025 / ATH 2.4.3) (Rhodobacter sphaeroides)).